A 190-amino-acid chain; its full sequence is Crossover junction endodeoxyribonuclease RuvC (190 aa).

Residues aspartate 7, glutamate 67, and aspartate 140 contribute to the active site. Aspartate 7, glutamate 67, and aspartate 140 together coordinate Mg(2+).

The protein belongs to the RuvC family. In terms of assembly, homodimer which binds Holliday junction (HJ) DNA. The HJ becomes 2-fold symmetrical on binding to RuvC with unstacked arms; it has a different conformation from HJ DNA in complex with RuvA. In the full resolvosome a probable DNA-RuvA(4)-RuvB(12)-RuvC(2) complex forms which resolves the HJ. Requires Mg(2+) as cofactor.

The protein localises to the cytoplasm. It carries out the reaction Endonucleolytic cleavage at a junction such as a reciprocal single-stranded crossover between two homologous DNA duplexes (Holliday junction).. The RuvA-RuvB-RuvC complex processes Holliday junction (HJ) DNA during genetic recombination and DNA repair. Endonuclease that resolves HJ intermediates. Cleaves cruciform DNA by making single-stranded nicks across the HJ at symmetrical positions within the homologous arms, yielding a 5'-phosphate and a 3'-hydroxyl group; requires a central core of homology in the junction. The consensus cleavage sequence is 5'-(A/T)TT(C/G)-3'. Cleavage occurs on the 3'-side of the TT dinucleotide at the point of strand exchange. HJ branch migration catalyzed by RuvA-RuvB allows RuvC to scan DNA until it finds its consensus sequence, where it cleaves and resolves the cruciform DNA. The protein is Crossover junction endodeoxyribonuclease RuvC of Fusobacterium nucleatum subsp. nucleatum (strain ATCC 25586 / DSM 15643 / BCRC 10681 / CIP 101130 / JCM 8532 / KCTC 2640 / LMG 13131 / VPI 4355).